Consider the following 102-residue polypeptide: U7-agatoxin-Ao1a (102 aa).

The N-terminal stretch at 1–19 is a signal peptide; sequence MTQAFFFLLLVSLVASTLS. Residues 20-39 constitute a propeptide that is removed on maturation; it reads KEFNFCPRAIDEVCPVKEKR. At W101 the chain carries Tryptophan amide.

This sequence belongs to the venom protein 11 family. 02 (wap-2) subfamily. Post-translationally, contains 5 disulfide bonds. In terms of tissue distribution, expressed by the venom gland.

Its subcellular location is the secreted. The polypeptide is U7-agatoxin-Ao1a (Agelena orientalis (Funnel-web spider)).